We begin with the raw amino-acid sequence, 129 residues long: Small ribosomal subunit protein uS11 (129 aa).

It belongs to the universal ribosomal protein uS11 family. Part of the 30S ribosomal subunit. Interacts with proteins S7 and S18. Binds to IF-3.

Located on the platform of the 30S subunit, it bridges several disparate RNA helices of the 16S rRNA. Forms part of the Shine-Dalgarno cleft in the 70S ribosome. The protein is Small ribosomal subunit protein uS11 of Methylorubrum populi (strain ATCC BAA-705 / NCIMB 13946 / BJ001) (Methylobacterium populi).